We begin with the raw amino-acid sequence, 215 residues long: 3-isopropylmalate dehydratase small subunit (215 aa).

Belongs to the LeuD family. LeuD type 1 subfamily. In terms of assembly, heterodimer of LeuC and LeuD.

It catalyses the reaction (2R,3S)-3-isopropylmalate = (2S)-2-isopropylmalate. It functions in the pathway amino-acid biosynthesis; L-leucine biosynthesis; L-leucine from 3-methyl-2-oxobutanoate: step 2/4. In terms of biological role, catalyzes the isomerization between 2-isopropylmalate and 3-isopropylmalate, via the formation of 2-isopropylmaleate. The sequence is that of 3-isopropylmalate dehydratase small subunit from Acinetobacter baumannii (strain AB307-0294).